The primary structure comprises 571 residues: Quinone-dependent D-lactate dehydrogenase (571 aa).

Positions 42-213 (GQGDALAVVF…SKLDDDRIKD (172 aa)) constitute an FAD-binding PCMH-type domain. FAD is bound by residues 76–80 (AANTG), 84–85 (GS), Gly143, Ser150, Gly160, and Val262. A disordered region spans residues 546-571 (RENDPTNSMNPGIGKTSKRKNWQEVE).

This sequence belongs to the quinone-dependent D-lactate dehydrogenase family. It depends on FAD as a cofactor.

It is found in the cell inner membrane. It catalyses the reaction (R)-lactate + a quinone = a quinol + pyruvate. With respect to regulation, inhibited by 2-hydroxy-3-butynoic acid, but not by p-chloromercuribenzoate, n-ethylmaleimide, or 5,5'-dithiobis(2-nitrobenzoic acid). Its function is as follows. Catalyzes the oxidation of D-lactate to pyruvate. Electrons derived from D-lactate oxidation are transferred to the ubiquinone/cytochrome electron transfer chain, where they may be used to provide energy for the active transport of a variety of amino acids and sugars across the membrane. This is Quinone-dependent D-lactate dehydrogenase from Escherichia coli (strain K12).